The primary structure comprises 1531 residues: Multidrug resistance-associated protein 1 (1531 aa).

Residues 1–33 (MALRGFCSADGSDPLWDWNVTWYTSNPDFTKCF) lie on the Extracellular side of the membrane. Residue N19 is glycosylated (N-linked (GlcNAc...) asparagine). Residues 34 to 54 (QNTVLVWVPCFYLWACFPFYF) form a helical membrane-spanning segment. Residues 55-74 (LYLSRHDRGYIQMTLLNKTK) are Cytoplasmic-facing. The chain crosses the membrane as a helical span at residues 75 to 95 (TALGFLLWIVCWADLFYSFWE). Residues 96–100 (RSRGI) are Extracellular-facing. Residues 101 to 121 (FLAPVFLVSPTLLGITMLLAT) traverse the membrane as a helical segment. Residues 122-133 (FLIQLERRKGVQ) are Cytoplasmic-facing. Residues 134 to 154 (SSGIMLTFWLVALLCALAILR) form a helical membrane-spanning segment. Residues 155–172 (SKIMTALKEDVQVDLFRD) lie on the Extracellular side of the membrane. Residues 173-193 (MTFYVYFSLVLIQLVLSCFSD) form a helical membrane-spanning segment. Residues 194–316 (RSPLFSETIH…KEWNPSLFKV (123 aa)) are Cytoplasmic-facing. Residue Y277 is modified to Phosphotyrosine. At S289 the chain carries Phosphoserine. A helical membrane pass occupies residues 317–337 (LYKTFGPYFLMSFFFKAIHDL). Residues 325-608 (FLMSFFFKAI…LPMVISSIVQ (284 aa)) form the ABC transmembrane type-1 1 domain. Over 338–363 (MMFSGPEILKLLINFVNDTKAPDWQG) the chain is Extracellular. Residues 364-384 (YFYTALLFVAACLQTLVLHQY) form a helical membrane-spanning segment. The Cytoplasmic portion of the chain corresponds to 385-440 (FHICFVSGMRIKTAVIGAVYRKALVITNAARKSSTVGEIVNLMSVDAQRFMDLATY). The helical transmembrane segment at 441–461 (INMIWSAPLQVILALYLLWRN) threads the bilayer. At 462 to 464 (LGP) the chain is on the extracellular side. The chain crosses the membrane as a helical span at residues 465-485 (PILAGVAVMVLMVPVNAVMAM). Over 486 to 547 (KTKTYQVAHM…VLKKSAYLAA (62 aa)) the chain is Cytoplasmic. K503 carries the post-translational modification N6-succinyllysine. Residues 548–568 (VGTFTWVCTPFLVALCTFAVY) traverse the membrane as a helical segment. The Extracellular portion of the chain corresponds to 569–590 (VTIDKNNVLDAQKAFVSLALFN). A helical membrane pass occupies residues 591–611 (ILRFPLNILPMVISSIVQASV). Over 612-967 (SLKRLRIFLS…VKLSVYWDYM (356 aa)) the chain is Cytoplasmic. Residues 644 to 868 (ITVRNATFTW…DGAFAEFLRT (225 aa)) form the ABC transporter 1 domain. Residue 678–685 (GQVGCGKS) coordinates ATP. Positions 871-893 (SAEQEQDPEDNGVTGVSGPGKEA) are disordered. A phosphoserine mark is found at S905, S915, and S930. Residues 917–938 (SSSYSGDVSRQHNSTAELQKDG) form a disordered region. Over residues 922-933 (GDVSRQHNSTAE) the composition is skewed to polar residues. The chain crosses the membrane as a helical span at residues 968–988 (KAIGLFISFLSIFLFICNHVA). An ABC transmembrane type-1 2 domain is found at 975 to 1256 (SFLSIFLFIC…LVRMSSEMET (282 aa)). Residues 989–1025 (ALASNYWLSLWTDDPIVNGTQEHTKVRLSVYGALGIS) are Extracellular-facing. N-linked (GlcNAc...) asparagine glycosylation occurs at N1006. The helical transmembrane segment at 1026–1046 (QGIAVFGYSMAVSIGGILASR) threads the bilayer. Topologically, residues 1047–1089 (CLHVDLLHSILRSPMSFFERTPSGNLVNRFSKELDTVDSMIPE) are cytoplasmic. Residues 1090 to 1110 (VIKMFMGSLFNVIGACIVILL) form a helical membrane-spanning segment. Position 1111 (A1111) is a topological domain, extracellular. A helical membrane pass occupies residues 1112–1132 (TPIAAIIIPPLGLIYFFVQRF). Topologically, residues 1133–1203 (YVASSRQLKR…VANRWLAVRL (71 aa)) are cytoplasmic. The chain crosses the membrane as a helical span at residues 1204–1224 (ECVGNCIVLFAALFAVISRHS). Topologically, residues 1225-1226 (LS) are extracellular. Residues 1227–1247 (AGLVGLSVSYSLQVTTYLNWL) form a helical membrane-spanning segment. Residues 1248–1531 (VRMSSEMETN…YNMARDAGLV (284 aa)) are Cytoplasmic-facing. The 235-residue stretch at 1293–1527 (VEFRNYCLRY…RGLFYNMARD (235 aa)) folds into the ABC transporter 2 domain. 1327-1334 (GRTGAGKS) provides a ligand contact to ATP.

This sequence belongs to the ABC transporter superfamily. ABCC family. Conjugate transporter (TC 3.A.1.208) subfamily.

It is found in the cell membrane. It localises to the basolateral cell membrane. The enzyme catalyses ATP + H2O + xenobioticSide 1 = ADP + phosphate + xenobioticSide 2.. It catalyses the reaction an S-substituted glutathione(in) + ATP + H2O = an S-substituted glutathione(out) + ADP + phosphate + H(+). The catalysed reaction is sphing-4-enine 1-phosphate(in) + ATP + H2O = sphing-4-enine 1-phosphate(out) + ADP + phosphate + H(+). It carries out the reaction leukotriene C4(in) + ATP + H2O = leukotriene C4(out) + ADP + phosphate + H(+). The enzyme catalyses 17beta-estradiol 17-O-(beta-D-glucuronate)(in) + ATP + H2O = 17beta-estradiol 17-O-(beta-D-glucuronate)(out) + ADP + phosphate + H(+). It catalyses the reaction daunorubicin(in) + ATP + H2O = daunorubicin(out) + ADP + phosphate + H(+). The catalysed reaction is vincristine(in) + ATP + H2O = vincristine(out) + ADP + phosphate + H(+). It carries out the reaction 2',3'-cGAMP(in) + ATP + H2O = 2',3'-cGAMP(out) + ADP + phosphate + H(+). The enzyme catalyses S-[(2E,6E,10E)-geranylgeranyl]-L-glutathione(in) + ATP + H2O = S-[(2E,6E,10E)-geranylgeranyl]-L-glutathione(out) + ADP + phosphate + H(+). It catalyses the reaction prostaglandin A2-S-(R)-glutathione(in) + ATP + H2O = prostaglandin A2-S-(R)-glutathione(out) + ADP + phosphate + H(+). The catalysed reaction is prostaglandin A2-S-(S)-glutathione(in) + ATP + H2O = prostaglandin A2-S-(S)-glutathione(out) + ADP + phosphate + H(+). Its activity is regulated as follows. MK 571 inhibits sphingosine 1-phosphate and leukotriene C4 export. Its function is as follows. Mediates export of organic anions and drugs from the cytoplasm. Mediates ATP-dependent transport of glutathione and glutathione conjugates, leukotriene C4, estradiol-17-beta-o-glucuronide, methotrexate, antiviral drugs and other xenobiotics. Confers resistance to anticancer drugs by decreasing accumulation of drug in cells, and by mediating ATP- and GSH-dependent drug export. Hydrolyzes ATP with low efficiency. Catalyzes the export of sphingosine 1-phosphate from mast cells independently of their degranulation. Participates in inflammatory response by allowing export of leukotriene C4 from leukotriene C4-synthesizing cells. Mediates ATP-dependent, GSH-independent cyclic GMP-AMP (cGAMP) export. Thus, by limiting intracellular cGAMP concentrations negatively regulates the cGAS-STING pathway. Exports S-geranylgeranyl-glutathione (GGG) in lymphoid cells and stromal compartments of lymphoid organs. ABCC1 (via extracellular transport) with GGT5 (via GGG catabolism) establish GGG gradients within lymphoid tissues to position P2RY8-positive lymphocytes at germinal centers in lymphoid follicles and restrict their chemotactic transmigration from blood vessels to the bone marrow parenchyma. Mediates basolateral export of GSH-conjugated R- and S-prostaglandin A2 diastereomers in polarized epithelial cells. The protein is Multidrug resistance-associated protein 1 of Macaca fascicularis (Crab-eating macaque).